The sequence spans 48 residues: 4-carboxymuconolactone decarboxylase (48 aa).

It belongs to the carboxymuconolactone decarboxylase family.

The enzyme catalyses (R)-2-(carboxymethyl)-5-oxo-2,5-dihydro-2-furoate + H(+) = (4,5-dihydro-5-oxofuran-2-yl)-acetate + CO2. It functions in the pathway aromatic compound metabolism; beta-ketoadipate pathway; 5-oxo-4,5-dihydro-2-furylacetate from 3-carboxy-cis,cis-muconate: step 2/2. The sequence is that of 4-carboxymuconolactone decarboxylase from Pseudomonas putida (Arthrobacter siderocapsulatus).